We begin with the raw amino-acid sequence, 133 residues long: Ubiquitin-like FUBI-ribosomal protein eS30 fusion protein (133 aa).

The region spanning methionine 1–glycine 74 is the Ubiquitin-like domain. Position 125 is an N6-succinyllysine (lysine 125).

This sequence in the N-terminal section; belongs to the ubiquitin family. In the C-terminal section; belongs to the eukaryotic ribosomal protein eS30 family. In terms of assembly, component of the 40S subunit of the ribosome. Post-translationally, FUBI is cleaved from ribosomal protein S30 by the deubiquitinase USP36 before the assembly of ribosomal protein S30 into pre-40S ribosomal particles. FUBI removal from ribosomal protein S30 is a crucial event for the final maturation of pre-40S particles.

The protein localises to the cytoplasm. It is found in the nucleus. May have pro-apoptotic activity. In terms of biological role, component of the 40S subunit of the ribosome. Contributes to the assembly and function of 40S ribosomal subunits. The polypeptide is Ubiquitin-like FUBI-ribosomal protein eS30 fusion protein (FAU) (Oryctolagus cuniculus (Rabbit)).